We begin with the raw amino-acid sequence, 520 residues long: UBX domain-containing protein 11 (520 aa).

The tract at residues 1–26 (MSSPLASLSKTRKVPLPSEPMNPGRR) is disordered. The stretch at 76–149 (MAFMTRKLWD…VREMERFLSD (74 aa)) forms a coiled coil. Residues 230 to 294 (LEPIPLKLYR…VSDLRNQVYL (65 aa)) form the SEP domain. Residues 392–469 (PAPPLSMLRI…GLVPKAALLL (78 aa)) enclose the UBX domain. The interval 476-520 (KSSLKFSPGPCPGPGPGPSPGPGPGPSPGPGPGPSPCPGPSPSPQ) is disordered. Residues 484–520 (GPCPGPGPGPSPGPGPGPSPGPGPGPSPCPGPSPSPQ) show a composition bias toward pro residues. Repeat copies occupy residues 487 to 494 (PGPGPGPS), 495 to 502 (PGPGPGPS), and 503 to 510 (PGPGPGPS). The segment at 487–510 (PGPGPGPSPGPGPGPSPGPGPGPS) is 3 X 8 AA tandem repeats of P-G-P-G-P-G-P-S.

In terms of assembly, interacts with GNA12, GNA13, RND1, RND2 and RND3.

The protein resides in the cytoplasm. It localises to the cytoskeleton. Its function is as follows. May be involved in the reorganization of actin cytoskeleton mediated by RND1, RND2 and RND3. Promotes RHOA activation mediated by GNA12 and GNA13. The chain is UBX domain-containing protein 11 (UBXN11) from Homo sapiens (Human).